An 827-amino-acid chain; its full sequence is DNA ligase (827 aa).

Residues 45–49, 94–95, and Glu128 contribute to the NAD(+) site; these read DAAYD and SL. Residue Lys130 is the N6-AMP-lysine intermediate of the active site. Residues Arg151, Glu188, Lys304, and Lys328 each coordinate NAD(+). Positions 451, 454, 475, and 481 each coordinate Zn(2+). Residues 748–827 form the BRCT domain; it reads AAAAAFSGRT…AEWLAMVEAA (80 aa).

Belongs to the NAD-dependent DNA ligase family. LigA subfamily. The cofactor is Mg(2+). Mn(2+) is required as a cofactor.

The catalysed reaction is NAD(+) + (deoxyribonucleotide)n-3'-hydroxyl + 5'-phospho-(deoxyribonucleotide)m = (deoxyribonucleotide)n+m + AMP + beta-nicotinamide D-nucleotide.. Its function is as follows. DNA ligase that catalyzes the formation of phosphodiester linkages between 5'-phosphoryl and 3'-hydroxyl groups in double-stranded DNA using NAD as a coenzyme and as the energy source for the reaction. It is essential for DNA replication and repair of damaged DNA. The protein is DNA ligase of Methylobacterium sp. (strain 4-46).